Here is a 423-residue protein sequence, read N- to C-terminus: MKVLGVVVEYNPFHNGHLYHLKSAKKLVKPDFTIAVMSGNFCQRGEPAIVNKFARAKMALLNGIDVVLEIPTVYALQDAGGFAFGSVGLMHKLGLVTDIVFGSESADISFLEKISKILYENSKEFDYLIKRELKKGLSYPNARKFALQKFLKTDLDTIKKLENSNDILGIEYIKAIFKYNSNIKYHVIKRVGAKYNEQNLSGKFSSATAIRNAIKFEKNIKEYVPESTYLILKDEFEKGRGPVFLENLEQFILSEFRLKARENLENIYGFSEGLDKRFIDSANISTNLKEFIENIKAKRFTFSRIRRLIFHAIFNFEKNYMEFSNKLGPQYARVLGFTTKGQEFLSYAKKKSTIPIITNPSLKNKILKDVLKNSERKWDFNISLYNWQFEKDILASNIYTLFYPNSSQRKSGMDFRKPIIIEG.

ATP-binding positions include 7 to 20, Gly102, Asn165, and Arg190; that span reads VVEYNPFHNGHLYH.

This sequence belongs to the TmcAL family.

The protein resides in the cytoplasm. The catalysed reaction is cytidine(34) in elongator tRNA(Met) + acetate + ATP = N(4)-acetylcytidine(34) in elongator tRNA(Met) + AMP + diphosphate. Its function is as follows. Catalyzes the formation of N(4)-acetylcytidine (ac(4)C) at the wobble position of elongator tRNA(Met), using acetate and ATP as substrates. First activates an acetate ion to form acetyladenylate (Ac-AMP) and then transfers the acetyl group to tRNA to form ac(4)C34. The sequence is that of tRNA(Met) cytidine acetate ligase from Thermosipho africanus (strain TCF52B).